An 89-amino-acid chain; its full sequence is Mu-theraphotoxin-Phlo1a (89 aa).

Residues 1 to 22 form the signal peptide; sequence MKVSVLITLAVLGVMFVWTSAA. The propeptide occupies 23–52; the sequence is EQEDHGSDRRDSPALLKNLLGEEVFQSEER. Disulfide bonds link Cys-54–Cys-68, Cys-61–Cys-73, and Cys-67–Cys-81. Ile-87 is subject to Isoleucine amide.

This sequence belongs to the neurotoxin 10 (Hwtx-1) family. 39 (Jztx-34) subfamily. As to expression, expressed by the venom gland.

The protein localises to the secreted. In terms of biological role, gating-modifier toxin that inhibits voltage-gated sodium channel Nav by shifting the threshold for channel activation to more positive potentials. This toxin moderately inhibits human Nav1.7/SCN9A (IC(50)=459 nM) and weakly inhibits hNav1.2/SCN2A and hNav1.5/SCN5A (&lt;20% inhibition at 1 uM peptide). Inhibition of Nav1.7 is voltage-dependent, with lower inhibition at more positive test pulses. This chain is Mu-theraphotoxin-Phlo1a, found in Phlogius sp. (Tarantula spider).